Here is a 521-residue protein sequence, read N- to C-terminus: Glucose-1-phosphate adenylyltransferase small subunit, chloroplastic (521 aa).

Residues 1–24 (MAASIGALKSSPSSHNCINERRND) are disordered. The N-terminal 72 residues, 1-72 (MAASIGALKS…RSPLIVSPKA (72 aa)), are a transit peptide targeting the chloroplast.

This sequence belongs to the bacterial/plant glucose-1-phosphate adenylyltransferase family. Heterotetramer.

The protein localises to the plastid. Its subcellular location is the chloroplast. It catalyses the reaction alpha-D-glucose 1-phosphate + ATP + H(+) = ADP-alpha-D-glucose + diphosphate. Its pathway is glycan biosynthesis; starch biosynthesis. With respect to regulation, activated by 3'phosphoglycerate, inhibited by orthophosphate. Allosteric regulation. In terms of biological role, this protein plays a role in synthesis of starch. It catalyzes the synthesis of the activated glycosyl donor, ADP-glucose from Glc-1-P and ATP. The chain is Glucose-1-phosphate adenylyltransferase small subunit, chloroplastic from Solanum lycopersicum (Tomato).